We begin with the raw amino-acid sequence, 413 residues long: Glutamyl-tRNA reductase (413 aa).

Substrate is bound by residues 57–60 (TCNR), serine 113, 118–120 (DFE), and glutamine 124. Cysteine 58 acts as the Nucleophile in catalysis. NADP(+) is bound at residue 193 to 198 (GTGKIG).

Belongs to the glutamyl-tRNA reductase family. As to quaternary structure, homodimer.

It carries out the reaction (S)-4-amino-5-oxopentanoate + tRNA(Glu) + NADP(+) = L-glutamyl-tRNA(Glu) + NADPH + H(+). It functions in the pathway porphyrin-containing compound metabolism; protoporphyrin-IX biosynthesis; 5-aminolevulinate from L-glutamyl-tRNA(Glu): step 1/2. Functionally, catalyzes the NADPH-dependent reduction of glutamyl-tRNA(Glu) to glutamate 1-semialdehyde (GSA). This Flavobacterium psychrophilum (strain ATCC 49511 / DSM 21280 / CIP 103535 / JIP02/86) protein is Glutamyl-tRNA reductase.